A 353-amino-acid chain; its full sequence is Melanin-concentrating hormone receptor 1 (353 aa).

The interval 1–28 (MDLEASLLPTGPNASNTSDGPDNLTSAG) is disordered. At 1–45 (MDLEASLLPTGPNASNTSDGPDNLTSAGPPPRTGSISYVNIIMPS) the chain is on the extracellular side. Polar residues predominate over residues 12–26 (PNASNTSDGPDNLTS). N-linked (GlcNAc...) asparagine glycosylation is found at Asn13, Asn16, and Asn23. The helical transmembrane segment at 46–66 (VFGTICLLGIIGNSMVIFAVV) threads the bilayer. At 67–79 (KKSKLHWFSNVPD) the chain is on the cytoplasmic side. A helical transmembrane segment spans residues 80 to 100 (IFIINLSVVDLLFLLGMPFMI). At 101–116 (HQLMGNGVWHFGETMC) the chain is on the extracellular side. The cysteines at positions 116 and 194 are disulfide-linked. A helical transmembrane segment spans residues 117–139 (TLITAMDANSQFTSTYILTAMAI). Residues 140–161 (DRYLATVHPISSTRFRKPSVAT) are Cytoplasmic-facing. A helical membrane pass occupies residues 162-182 (LVICLLWALSIISITPVWLYA). Residues 183–204 (RLIPFPGGTVGCGIRLPNPDTD) are Extracellular-facing. The helical transmembrane segment at 205-225 (LYWFTLYQFFLAFALPFVVIT) threads the bilayer. The Cytoplasmic segment spans residues 226-256 (AAYVRILQRMTSSVAPASQRSIRLRTKRVTR). A helical membrane pass occupies residues 257–277 (TAIAICLVFFVCWAPYYVLQL). The Extracellular portion of the chain corresponds to 278-294 (TQLSISRPTLTFVYLYN). The helical transmembrane segment at 295–315 (AAISLGYANSCLNPFVYIVLC) threads the bilayer. Topologically, residues 316 to 353 (ETFRKRLVLSVKPAAQGQLRAVSNAQTAEEERTESKGT) are cytoplasmic.

It belongs to the G-protein coupled receptor 1 family. As to quaternary structure, interacts with NCDN.

It localises to the cell membrane. Functionally, receptor for melanin-concentrating hormone, coupled to both G proteins that inhibit adenylyl cyclase and G proteins that activate phosphoinositide hydrolysis. In Sus scrofa (Pig), this protein is Melanin-concentrating hormone receptor 1.